A 215-amino-acid polypeptide reads, in one-letter code: Phosphatidylserine decarboxylase proenzyme (215 aa).

Ser183 functions as the Schiff-base intermediate with substrate; via pyruvic acid in the catalytic mechanism. Ser183 bears the Pyruvic acid (Ser); by autocatalysis mark.

Belongs to the phosphatidylserine decarboxylase family. PSD-A subfamily. In terms of assembly, heterodimer of a large membrane-associated beta subunit and a small pyruvoyl-containing alpha subunit. Pyruvate serves as cofactor. Post-translationally, is synthesized initially as an inactive proenzyme. Formation of the active enzyme involves a self-maturation process in which the active site pyruvoyl group is generated from an internal serine residue via an autocatalytic post-translational modification. Two non-identical subunits are generated from the proenzyme in this reaction, and the pyruvate is formed at the N-terminus of the alpha chain, which is derived from the carboxyl end of the proenzyme. The post-translation cleavage follows an unusual pathway, termed non-hydrolytic serinolysis, in which the side chain hydroxyl group of the serine supplies its oxygen atom to form the C-terminus of the beta chain, while the remainder of the serine residue undergoes an oxidative deamination to produce ammonia and the pyruvoyl prosthetic group on the alpha chain.

Its subcellular location is the cell membrane. The catalysed reaction is a 1,2-diacyl-sn-glycero-3-phospho-L-serine + H(+) = a 1,2-diacyl-sn-glycero-3-phosphoethanolamine + CO2. Its pathway is phospholipid metabolism; phosphatidylethanolamine biosynthesis; phosphatidylethanolamine from CDP-diacylglycerol: step 2/2. Functionally, catalyzes the formation of phosphatidylethanolamine (PtdEtn) from phosphatidylserine (PtdSer). The polypeptide is Phosphatidylserine decarboxylase proenzyme (Symbiobacterium thermophilum (strain DSM 24528 / JCM 14929 / IAM 14863 / T)).